The sequence spans 257 residues: Sulfur carrier protein FdhD (257 aa).

Residue Cys-105 is the Cysteine persulfide intermediate of the active site.

This sequence belongs to the FdhD family.

It localises to the cytoplasm. Its function is as follows. Required for formate dehydrogenase (FDH) activity. Acts as a sulfur carrier protein that transfers sulfur from IscS to the molybdenum cofactor prior to its insertion into FDH. The chain is Sulfur carrier protein FdhD from Saccharolobus solfataricus (strain ATCC 35092 / DSM 1617 / JCM 11322 / P2) (Sulfolobus solfataricus).